A 367-amino-acid chain; its full sequence is Probable sugar phosphate/phosphate translocator At1g48230 (367 aa).

A run of 10 helical transmembrane segments spans residues 9–29, 43–63, 76–96, 106–126, 140–160, 163–183, 193–213, 229–249, 257–276, and 280–302; these read LVLT…VILY, LPIT…FLLI, FEIY…SLWF, VAFI…MAVV, MVLV…FNVI, VYQV…QVLL, VTSL…PWYV, WIFF…FLVI, IRVA…TVIF, and TITG…YNYI. Positions 321–330 are enriched in basic and acidic residues; it reads ITKDWKEKNS. Residues 321-341 form a disordered region; that stretch reads ITKDWKEKNSSDGGSPRGLEL.

It belongs to the TPT transporter family. TPT (TC 2.A.7.9) subfamily.

It is found in the membrane. The sequence is that of Probable sugar phosphate/phosphate translocator At1g48230 from Arabidopsis thaliana (Mouse-ear cress).